Consider the following 982-residue polypeptide: ATP-dependent DNA helicase Q5 (982 aa).

A Helicase ATP-binding domain is found at 39 to 213; that stretch reads MAVVKGAEDV…FAALHLKQPV (175 aa). Position 52 to 59 (52 to 59) interacts with ATP; that stretch reads MPTGAGKS. A DEAH box motif is present at residues 157–160; the sequence is DEAH. One can recognise a Helicase C-terminal domain in the interval 241 to 398; it reads NLRDFCLKAL…NKPSDKATLL (158 aa). Residues C412, C428, C432, and C435 each coordinate Zn(2+). Phosphoserine occurs at positions 489 and 492. Positions 491 to 621 are interaction with POLR2A; that stretch reads GSGDEGRDEA…ASKDGQLYDM (131 aa). A Phosphothreonine modification is found at T527. Residues 653-726 form an interaction with RAD51 region; the sequence is PKRVGAGFSK…ALGSSVNCGD (74 aa). 2 disordered regions span residues 675–797 and 812–893; these read GKSH…PGKC and QTEG…AQEP. The residue at position 728 (S728) is a Phosphoserine; by CDK1.

This sequence belongs to the helicase family. RecQ subfamily. In terms of assembly, monomer. Interacts with TOP2A, TOP3A and TOP3B. Interacts with RNA polymerase II subunit POLR2A. Identified in a complex with the RNA polymerase II core bound to DNA. Interacts with RAD51. Interacts with WRN; this interaction stimulates WRN helicase activity on DNA fork duplexes. Interacts with MUS1; this interaction promotes MUS81-dependent mitotic DNA synthesis. The cofactor is Zn(2+). Phosphorylated by CDK1 at Ser-728; this phosphorylation is required for RECQL5-mediated disruption of RAD51 filaments on stalled replication forks.

The protein localises to the nucleus. It localises to the nucleoplasm. The catalysed reaction is Couples ATP hydrolysis with the unwinding of duplex DNA by translocating in the 3'-5' direction.. The enzyme catalyses ATP + H2O = ADP + phosphate + H(+). In terms of biological role, DNA helicase that plays an important role in DNA replication, transcription and repair. Binds to the RNA polymerase II subunit POLR2A during transcription elongation and suppresses transcription-associated genomic instability. Also associates with POLR1A and enforces the stability of ribosomal DNA arrays. Plays an important role in mitotic chromosome separation after cross-over events and cell cycle progress. Mechanistically, removes RAD51 filaments protecting stalled replication forks at common fragile sites and stimulates MUS81-EME1 endonuclease leading to mitotic DNA synthesis. Required for efficient DNA repair, including repair of inter-strand cross-links. Stimulates DNA decatenation mediated by TOP2A. Prevents sister chromatid exchange and homologous recombination. This Mus musculus (Mouse) protein is ATP-dependent DNA helicase Q5 (Recql5).